Here is a 169-residue protein sequence, read N- to C-terminus: Disulfide bond formation protein B 1 (169 aa).

Over 1–14 the chain is Cytoplasmic; that stretch reads MSDDRLGLGRERRF. A helical transmembrane segment spans residues 15–31; that stretch reads LVLLGIICLALIGGALY. At 32–49 the chain is on the periplasmic side; it reads MQVVLGEAPCPLCILQRY. Cys-41 and Cys-44 are disulfide-bonded. Residues 50-64 form a helical membrane-spanning segment; sequence ALLLIALFAFIGAAM. The Cytoplasmic portion of the chain corresponds to 65–71; it reads SSRRGVT. The chain crosses the membrane as a helical span at residues 72–89; the sequence is VMETLVVICALAGAGVAG. Topologically, residues 90-144 are periplasmic; it reads HHVYTQFYPSVSCGIDVLQPIVDSLPLAKIFPLGFQVDGFCSTPYPPILGLSLAQ. An intrachain disulfide couples Cys-102 to Cys-130. A helical transmembrane segment spans residues 145 to 163; the sequence is WALVAFVLTVILVPLGVVR. Over 164 to 169 the chain is Cytoplasmic; sequence NRKKTY.

This sequence belongs to the DsbB family.

Its subcellular location is the cell inner membrane. In terms of biological role, required for disulfide bond formation in some periplasmic proteins. Acts by oxidizing the DsbA protein. This Pseudomonas fluorescens (strain ATCC BAA-477 / NRRL B-23932 / Pf-5) protein is Disulfide bond formation protein B 1.